A 273-amino-acid polypeptide reads, in one-letter code: Large ribosomal subunit protein uL2 (273 aa).

The interval 228–273 is disordered; that stretch reads VDHPHGGGEGKTSGGRHPVTPWGFPTKGKKTRKNKRTSKFIVKKRK. Basic residues predominate over residues 254 to 273; the sequence is KGKKTRKNKRTSKFIVKKRK.

The protein belongs to the universal ribosomal protein uL2 family. As to quaternary structure, part of the 50S ribosomal subunit. Forms a bridge to the 30S subunit in the 70S ribosome.

Functionally, one of the primary rRNA binding proteins. Required for association of the 30S and 50S subunits to form the 70S ribosome, for tRNA binding and peptide bond formation. It has been suggested to have peptidyltransferase activity; this is somewhat controversial. Makes several contacts with the 16S rRNA in the 70S ribosome. The protein is Large ribosomal subunit protein uL2 of Rickettsia africae (strain ESF-5).